The primary structure comprises 421 residues: Plant UBX domain-containing protein 5 (421 aa).

One can recognise a UBA domain in the interval 4–45 (ETNENLINSFIEITSSSREEANFFLESHTWNLDAAVSTFLDN). 2 disordered regions span residues 46 to 171 (DAAA…MMVQ) and 292 to 338 (ENFT…PSRG). Residues 69 to 84 (QSPSQSHSPDYTPSET) are compositionally biased toward polar residues. The span at 85–102 (SPSPSRSRSASPSSRAAP) shows a compositional bias: low complexity. Residues 231 to 295 (RIMHTITFWL…DLVRRGENFT (65 aa)) enclose the SEP domain. Residues 312–328 (GASGSGSSSAPQASSAP) are compositionally biased toward low complexity. In terms of domain architecture, UBX spans 343–420 (PAAPTTSIQL…GIANAVVIQK (78 aa)).

As to quaternary structure, interacts with CDC48A (non-hexameric) via its UBX domain.

This is Plant UBX domain-containing protein 5 from Arabidopsis thaliana (Mouse-ear cress).